We begin with the raw amino-acid sequence, 190 residues long: UPF0301 protein Rpic_0619 (190 aa).

Belongs to the UPF0301 (AlgH) family.

This is UPF0301 protein Rpic_0619 from Ralstonia pickettii (strain 12J).